We begin with the raw amino-acid sequence, 125 residues long: Ribonuclease P protein component 1 (125 aa).

A compositionally biased stretch (basic and acidic residues) spans 1–13; that stretch reads MRRNGKEGKDRAP. The interval 1-24 is disordered; sequence MRRNGKEGKDRAPGRPQRKGQEVA.

This sequence belongs to the eukaryotic/archaeal RNase P protein component 1 family. Consists of a catalytic RNA component and at least 4-5 protein subunits.

The protein resides in the cytoplasm. It carries out the reaction Endonucleolytic cleavage of RNA, removing 5'-extranucleotides from tRNA precursor.. Part of ribonuclease P, a protein complex that generates mature tRNA molecules by cleaving their 5'-ends. In Thermococcus onnurineus (strain NA1), this protein is Ribonuclease P protein component 1.